Here is a 362-residue protein sequence, read N- to C-terminus: MSIEINNISKYFGRTQVLSDITLNVFSGEMVALLGPSGSGKTTLLRIIAGLEQQTAGKLSFHGQDVSRMHAKDRQVGFVFQHYALFRHMTVFDNVAFGLTVLPRRRRPNMAAIRRKVMELLEMVQLTHFAERYPSQLSGGQKQRVALARALAVEPQILLLDEPFGALDAQVRMELRRWLRQLHEELKFTSVFVTHDQEEAMEVADRVVVMRQGNIEQVGTPQEVWRYPASRFVMEFLGEVNHFSGEIKGSQLLIGGQHLPLNVTPIHQGNVDVFLRPWDIMMNSQPTLSSPLPVQVTEVSPRGHFWQLSVQPLGWHHESVAVVWFDETSVPTRGNRYFIGGTEARLYAGDKQLQTLSLAQTA.

In terms of domain architecture, ABC transporter spans Ile-3–Leu-237. Position 35–42 (Gly-35–Thr-42) interacts with ATP.

Belongs to the ABC transporter superfamily. Sulfate/tungstate importer (TC 3.A.1.6) family. In terms of assembly, the complex is composed of two ATP-binding proteins (CysA), two transmembrane proteins (CysT and CysW) and a solute-binding protein (CysP).

The protein localises to the cell inner membrane. It catalyses the reaction sulfate(out) + ATP + H2O = sulfate(in) + ADP + phosphate + H(+). It carries out the reaction thiosulfate(out) + ATP + H2O = thiosulfate(in) + ADP + phosphate + H(+). In terms of biological role, part of the ABC transporter complex CysAWTP involved in sulfate/thiosulfate import. Responsible for energy coupling to the transport system. This is Sulfate/thiosulfate import ATP-binding protein CysA from Photorhabdus laumondii subsp. laumondii (strain DSM 15139 / CIP 105565 / TT01) (Photorhabdus luminescens subsp. laumondii).